The chain runs to 217 residues: Adenylate kinase (217 aa).

11–16 (GSGKGT) provides a ligand contact to ATP. The tract at residues 31–61 (STGTMLRQALTRSTHKSYELHKNIMHTGDLV) is NMP. AMP-binding positions include Thr-32, Arg-37, 59 to 61 (DLV), 87 to 90 (GFPR), and Gln-94. Residues 124 to 161 (GRRIHVGSGRTYHIKFNPPRNYGLDDITGEILTTRKDD) are LID. Residues Arg-125 and 134-135 (TY) contribute to the ATP site. Arg-158 and Arg-169 together coordinate AMP. Arg-202 provides a ligand contact to ATP.

It belongs to the adenylate kinase family. As to quaternary structure, monomer.

It localises to the cytoplasm. It carries out the reaction AMP + ATP = 2 ADP. Its pathway is purine metabolism; AMP biosynthesis via salvage pathway; AMP from ADP: step 1/1. Its function is as follows. Catalyzes the reversible transfer of the terminal phosphate group between ATP and AMP. Plays an important role in cellular energy homeostasis and in adenine nucleotide metabolism. The sequence is that of Adenylate kinase from Blochmanniella pennsylvanica (strain BPEN).